We begin with the raw amino-acid sequence, 680 residues long: Probable oxidoreductase YoaE (680 aa).

Residues 9–66 (NGIFKSVCSLDCPDQCGLLIHKKDGKIVKVQGDPDHPVTAGNICNKVRNMTERIYDEK) form the 4Fe-4S Mo/W bis-MGD-type domain. Residues Cys-16, Cys-20, Cys-24, and Cys-52 each contribute to the [4Fe-4S] cluster site.

Belongs to the prokaryotic molybdopterin-containing oxidoreductase family. Mo-bis(molybdopterin guanine dinucleotide) is required as a cofactor.

This is Probable oxidoreductase YoaE (yoaE) from Bacillus subtilis (strain 168).